A 236-amino-acid chain; its full sequence is Ribose-5-phosphate isomerase A (236 aa).

Substrate-binding positions include 31 to 34, 84 to 87, and 97 to 100; these read TGST, DGAD, and KGGG. The Proton acceptor role is filled by Glu106. Lys124 is a binding site for substrate.

Belongs to the ribose 5-phosphate isomerase family. As to quaternary structure, homodimer.

The enzyme catalyses aldehydo-D-ribose 5-phosphate = D-ribulose 5-phosphate. It participates in carbohydrate degradation; pentose phosphate pathway; D-ribose 5-phosphate from D-ribulose 5-phosphate (non-oxidative stage): step 1/1. Catalyzes the reversible conversion of ribose-5-phosphate to ribulose 5-phosphate. The chain is Ribose-5-phosphate isomerase A from Polynucleobacter asymbioticus (strain DSM 18221 / CIP 109841 / QLW-P1DMWA-1) (Polynucleobacter necessarius subsp. asymbioticus).